A 471-amino-acid polypeptide reads, in one-letter code: Ribulose bisphosphate carboxylase large chain (471 aa).

Positions 1 to 2 are excised as a propeptide; it reads MS. Pro-3 carries the post-translational modification N-acetylproline. An N6,N6,N6-trimethyllysine modification is found at Lys-14. Substrate contacts are provided by Asn-123 and Thr-173. Residue Lys-175 is the Proton acceptor of the active site. A substrate-binding site is contributed by Lys-177. 3 residues coordinate Mg(2+): Lys-201, Asp-203, and Glu-204. Lys-201 carries the N6-carboxylysine modification. Catalysis depends on His-294, which acts as the Proton acceptor. 3 residues coordinate substrate: Arg-295, His-327, and Ser-379.

The protein belongs to the RuBisCO large chain family. Type I subfamily. In terms of assembly, heterohexadecamer of 8 large chains and 8 small chains; disulfide-linked. The disulfide link is formed within the large subunit homodimers. Mg(2+) serves as cofactor. The disulfide bond which can form in the large chain dimeric partners within the hexadecamer appears to be associated with oxidative stress and protein turnover.

The protein resides in the plastid. Its subcellular location is the chloroplast. The enzyme catalyses 2 (2R)-3-phosphoglycerate + 2 H(+) = D-ribulose 1,5-bisphosphate + CO2 + H2O. It carries out the reaction D-ribulose 1,5-bisphosphate + O2 = 2-phosphoglycolate + (2R)-3-phosphoglycerate + 2 H(+). Functionally, ruBisCO catalyzes two reactions: the carboxylation of D-ribulose 1,5-bisphosphate, the primary event in carbon dioxide fixation, as well as the oxidative fragmentation of the pentose substrate in the photorespiration process. Both reactions occur simultaneously and in competition at the same active site. In Drymophloeus subdistichus (Palm tree), this protein is Ribulose bisphosphate carboxylase large chain.